A 112-amino-acid polypeptide reads, in one-letter code: MNFDMSKLMQQAQKMQEQMKKAQQERENMEVIGESGAGLVTVTMTGKYDVKSVSIDNSLMSEDKEILEDLIAAAVNSAVKKVEENSTASSNIYKMAKDAGIDLPSGINFPFK.

Residues 1–27 (MNFDMSKLMQQAQKMQEQMKKAQQERE) form a disordered region. Positions 17-27 (EQMKKAQQERE) are enriched in basic and acidic residues.

The protein belongs to the YbaB/EbfC family. In terms of assembly, homodimer.

The protein resides in the cytoplasm. It is found in the nucleoid. Its function is as follows. Binds to DNA and alters its conformation. May be involved in regulation of gene expression, nucleoid organization and DNA protection. The sequence is that of Nucleoid-associated protein FTH_1374 from Francisella tularensis subsp. holarctica (strain OSU18).